The sequence spans 302 residues: tRNA dimethylallyltransferase (302 aa).

An ATP-binding site is contributed by 10–17 (GPTAIGKT). Residue 12–17 (TAIGKT) participates in substrate binding. The tract at residues 35–38 (DSRQ) is interaction with substrate tRNA.

It belongs to the IPP transferase family. As to quaternary structure, monomer. Mg(2+) serves as cofactor.

The catalysed reaction is adenosine(37) in tRNA + dimethylallyl diphosphate = N(6)-dimethylallyladenosine(37) in tRNA + diphosphate. Its function is as follows. Catalyzes the transfer of a dimethylallyl group onto the adenine at position 37 in tRNAs that read codons beginning with uridine, leading to the formation of N6-(dimethylallyl)adenosine (i(6)A). This is tRNA dimethylallyltransferase from Christiangramia forsetii (strain DSM 17595 / CGMCC 1.15422 / KT0803) (Gramella forsetii).